A 38-amino-acid polypeptide reads, in one-letter code: Histatin-1 (38 aa).

Residues 1-38 (DSHEERHHGRHGHHKYGRKFHEKHHSHRGYRSNYLYDN) are disordered. Ser2 is modified (phosphoserine). Basic residues predominate over residues 8–30 (HGRHGHHKYGRKFHEKHHSHRGY).

The protein belongs to the histatin/statherin family.

Its subcellular location is the secreted. In terms of biological role, histatins (Hsts) are cationic and histidine-rich secreted peptides mainly synthesized by saliva glands of humans and higher primates. Hsts are considered to be major precursors of the protective proteinaceous structure on tooth surfaces (enamel pellicle). The chain is Histatin-1 (HTN1) from Macaca fascicularis (Crab-eating macaque).